A 215-amino-acid polypeptide reads, in one-letter code: Ribose-5-phosphate isomerase A (215 aa).

Substrate-binding positions include 26–29 (TGST), 79–82 (DGAD), and 92–95 (KGGG). Glu101 (proton acceptor) is an active-site residue. Residue Lys119 coordinates substrate.

Belongs to the ribose 5-phosphate isomerase family. As to quaternary structure, homodimer.

The enzyme catalyses aldehydo-D-ribose 5-phosphate = D-ribulose 5-phosphate. Its pathway is carbohydrate degradation; pentose phosphate pathway; D-ribose 5-phosphate from D-ribulose 5-phosphate (non-oxidative stage): step 1/1. Its function is as follows. Catalyzes the reversible conversion of ribose-5-phosphate to ribulose 5-phosphate. In Xanthomonas campestris pv. campestris (strain 8004), this protein is Ribose-5-phosphate isomerase A.